Here is a 116-residue protein sequence, read N- to C-terminus: MSTSELLKHIYDINLSYLLLAQRLINDEKASAMFRLGITDTMADALSQLTLPQMVKLAETNQLVCHFRFSDHNTIHHLTKESRVDDLQQIHTGILLSSHLLHELSLKDDSTPKKRA.

The protein belongs to the FlhD family. In terms of assembly, homodimer; disulfide-linked. Forms a heterohexamer composed of two FlhC and four FlhD subunits. Each FlhC binds a FlhD dimer, forming a heterotrimer, and a hexamer assembles by dimerization of two heterotrimers.

The protein localises to the cytoplasm. In terms of biological role, functions in complex with FlhC as a master transcriptional regulator that regulates transcription of several flagellar and non-flagellar operons by binding to their promoter region. Activates expression of class 2 flagellar genes, including fliA, which is a flagellum-specific sigma factor that turns on the class 3 genes. Also regulates genes whose products function in a variety of physiological pathways. The protein is Flagellar transcriptional regulator FlhD of Yersinia pseudotuberculosis serotype O:1b (strain IP 31758).